Here is a 170-residue protein sequence, read N- to C-terminus: Photosystem I assembly protein Ycf3 (170 aa).

TPR repeat units follow at residues 35-68 (AFTY…EIDP), 72-105 (SYIL…NPFL), and 120-153 (GEQA…TPGN).

The protein belongs to the Ycf3 family.

The protein localises to the plastid. It is found in the chloroplast thylakoid membrane. Functionally, essential for the assembly of the photosystem I (PSI) complex. May act as a chaperone-like factor to guide the assembly of the PSI subunits. In Oryza nivara (Indian wild rice), this protein is Photosystem I assembly protein Ycf3.